A 328-amino-acid polypeptide reads, in one-letter code: MANSDSPEQNENHCSSINSSIPLTPGSLPTLTLSGKIRVTVTFFLFLLSTIFNTSFLLKLQNWTQRKEKRKKLSRMKLLLKHLTLANLLETLIVMPLDGMWNITVQWYAGELLCKVLSYLKLFSMYAPAFMMVVISLDRSLAITKPLAVKSNSKLGQFMIGLAWLLSSIFAGPQLYIFGMIHLADDSGQTEGFSQCVTHCSFPQWWHQAFYNFFTFSCLFIIPLLIMVICNAKIIFTLTRVLHQDPHKLQLNQSKNNIPRARLRTLKMTVAFATSFTVCWTPYYVLGIWYWFDPDMVNRVSDPVNHFFFLFAFLNPCFNPLIYGYFSL.

Topologically, residues Met-1–Arg-38 are extracellular. A glycan (N-linked (GlcNAc...) asparagine) is linked at Asn-18. A helical transmembrane segment spans residues Val-39–Leu-58. Residues Lys-59–Lys-77 are Cytoplasmic-facing. The helical transmembrane segment at Leu-78–Leu-97 threads the bilayer. The Extracellular portion of the chain corresponds to Asp-98–Lys-115. A glycan (N-linked (GlcNAc...) asparagine) is linked at Asn-102. Cys-114 and Cys-196 are disulfide-bonded. The helical transmembrane segment at Val-116–Leu-137 threads the bilayer. Over Asp-138–Trp-164 the chain is Cytoplasmic. The helical transmembrane segment at Leu-165–Ala-184 threads the bilayer. The Extracellular portion of the chain corresponds to Asp-185–Asn-212. A helical transmembrane segment spans residues Phe-213–Ala-232. The Cytoplasmic portion of the chain corresponds to Lys-233 to Thr-281. The chain crosses the membrane as a helical span at residues Pro-282–Val-300. The Extracellular segment spans residues Ser-301 to His-306. A helical transmembrane segment spans residues Phe-307–Phe-326. The Cytoplasmic portion of the chain corresponds to Ser-327–Leu-328.

It belongs to the G-protein coupled receptor 1 family.

The protein localises to the cell membrane. Receptor for gonadotropin releasing hormone (GnRH) that mediates the action of GnRH to stimulate the secretion of the gonadotropic hormones luteinizing hormone (LH) and follicle-stimulating hormone (FSH). This receptor mediates its action by association with G-proteins that activate a phosphatidylinositol-calcium second messenger system. The polypeptide is Gonadotropin-releasing hormone receptor (GNRHR) (Bos mutus grunniens (Wild yak)).